Consider the following 78-residue polypeptide: DNA-directed RNA polymerase subunit Rpo5 (78 aa).

This sequence belongs to the archaeal Rpo5/eukaryotic RPB5 RNA polymerase subunit family. Part of the RNA polymerase complex.

It is found in the cytoplasm. The enzyme catalyses RNA(n) + a ribonucleoside 5'-triphosphate = RNA(n+1) + diphosphate. Its function is as follows. DNA-dependent RNA polymerase (RNAP) catalyzes the transcription of DNA into RNA using the four ribonucleoside triphosphates as substrates. The chain is DNA-directed RNA polymerase subunit Rpo5 from Methanocaldococcus jannaschii (strain ATCC 43067 / DSM 2661 / JAL-1 / JCM 10045 / NBRC 100440) (Methanococcus jannaschii).